Here is a 286-residue protein sequence, read N- to C-terminus: 2-hydroxy-6-oxo-6-phenylhexa-2,4-dienoate hydrolase (286 aa).

Substrate-binding positions include Gly-42–Gly-43, Asn-51, Asn-111, Ser-180, and Arg-190. His-265 functions as the Proton acceptor in the catalytic mechanism. Trp-266 is a substrate binding site.

It belongs to the AB hydrolase superfamily. BphD family. In terms of assembly, homodimer.

It catalyses the reaction 2,6-dioxo-6-phenylhexa-3-enoate + H2O = 2-oxopent-4-enoate + benzoate + H(+). It functions in the pathway xenobiotic degradation; biphenyl degradation; 2-hydroxy-2,4-pentadienoate and benzoate from biphenyl: step 4/4. In terms of biological role, catalyzes an unusual C-C bond hydrolysis of 2-hydroxy-6-oxo-6-phenylhexa-2,4-dienoic acid (HOPDA) to produce benzoic acid and 2-hydroxy-2,4-pentadienoic acid (HPD). The sequence is that of 2-hydroxy-6-oxo-6-phenylhexa-2,4-dienoate hydrolase from Polaromonas naphthalenivorans (strain CJ2).